The following is a 92-amino-acid chain: Large ribosomal subunit protein eL43 (92 aa).

4 residues coordinate Zn(2+): cysteine 39, cysteine 42, cysteine 57, and cysteine 60. The segment at 39–60 adopts a C4-type zinc-finger fold; it reads CSFCGKTKMKRRAVGIWHCGSC.

Belongs to the eukaryotic ribosomal protein eL43 family. As to quaternary structure, component of the large ribosomal subunit.

Its subcellular location is the cytoplasm. Functionally, component of the large ribosomal subunit. The ribosome is a large ribonucleoprotein complex responsible for the synthesis of proteins in the cell. This is Large ribosomal subunit protein eL43 (Rpl37a) from Mus musculus (Mouse).